An 824-amino-acid polypeptide reads, in one-letter code: U-box domain-containing protein 24 (824 aa).

The U-box domain maps to 13–92; the sequence is GAFEAFVCPL…HEWRARNEEK (80 aa). ARM repeat units lie at residues 133-172, 175-214, 217-258, 260-299, 300-339, 341-385, 396-435, 441-481, and 486-525; these read AASK…VLVE, DDNK…ELSG, PTCE…NLDR, DANV…ELAL, ANDD…EISS, EASA…NLVA, DDDE…PAIG, VLAG…DIRV, and LLRN…EEQA.

In terms of assembly, interacts with BZR1, BZR2, BZR3 and GSK2. In terms of processing, auto-ubiquitinated. Phosphorylated by GSK2. Phosphorylation of PUB24 increases its cellular stability.

The protein resides in the cytoplasm. It localises to the cytosol. Its subcellular location is the nucleus. It carries out the reaction S-ubiquitinyl-[E2 ubiquitin-conjugating enzyme]-L-cysteine + [acceptor protein]-L-lysine = [E2 ubiquitin-conjugating enzyme]-L-cysteine + N(6)-ubiquitinyl-[acceptor protein]-L-lysine.. Its pathway is protein modification; protein ubiquitination. Functionally, E3 ubiquitin-protein ligase that functions as a negative regulator of brassinosteroid (BR) signaling. Targets BZR1, a positive regulator of BR signaling pathway, and promotes its degradation via the ubiquitin-26S proteasome pathway. This is U-box domain-containing protein 24 from Oryza sativa subsp. japonica (Rice).